The sequence spans 739 residues: Elongation factor 2 (739 aa).

Residues 19–261 (RNIRNIGIIA…MVALHVPDPI (243 aa)) form the tr-type G domain. Residues 28–35 (AHVDHGKT), 94–98 (DTPGH), and 148–151 (NKID) contribute to the GTP site. H603 is modified (diphthamide).

The protein belongs to the TRAFAC class translation factor GTPase superfamily. Classic translation factor GTPase family. EF-G/EF-2 subfamily.

Its subcellular location is the cytoplasm. Catalyzes the GTP-dependent ribosomal translocation step during translation elongation. During this step, the ribosome changes from the pre-translocational (PRE) to the post-translocational (POST) state as the newly formed A-site-bound peptidyl-tRNA and P-site-bound deacylated tRNA move to the P and E sites, respectively. Catalyzes the coordinated movement of the two tRNA molecules, the mRNA and conformational changes in the ribosome. The sequence is that of Elongation factor 2 from Korarchaeum cryptofilum (strain OPF8).